A 297-amino-acid polypeptide reads, in one-letter code: Undecaprenyl-diphosphatase (297 aa).

7 consecutive transmembrane segments (helical) span residues P58–F78, A103–I123, L138–L158, L168–V188, A208–L228, V243–L263, and F274–L294.

Belongs to the UppP family.

The protein localises to the cell inner membrane. It carries out the reaction di-trans,octa-cis-undecaprenyl diphosphate + H2O = di-trans,octa-cis-undecaprenyl phosphate + phosphate + H(+). Its function is as follows. Catalyzes the dephosphorylation of undecaprenyl diphosphate (UPP). Confers resistance to bacitracin. This is Undecaprenyl-diphosphatase from Synechococcus sp. (strain ATCC 27144 / PCC 6301 / SAUG 1402/1) (Anacystis nidulans).